We begin with the raw amino-acid sequence, 456 residues long: Bifunctional protein GlmU (456 aa).

The interval 1-229 is pyrophosphorylase; sequence MLNSAMSVVI…LSEVEGVNNR (229 aa). Residues 11–14, Lys25, Gln76, 81–82, 103–105, Gly140, Glu154, Asn169, and Asn227 contribute to the UDP-N-acetyl-alpha-D-glucosamine site; these read LAAG, GT, and YGD. Asp105 lines the Mg(2+) pocket. Asn227 provides a ligand contact to Mg(2+). Residues 230-250 form a linker region; sequence LQLSRLERVYQSEQAEKLLLA. Residues 251 to 456 form an N-acetyltransferase region; that stretch reads GVMLRDPARF…QGWQRPAKKK (206 aa). UDP-N-acetyl-alpha-D-glucosamine is bound by residues Arg333 and Lys351. Catalysis depends on His363, which acts as the Proton acceptor. Residues Tyr366 and Asn377 each contribute to the UDP-N-acetyl-alpha-D-glucosamine site. Residues Ala380, 386–387, Ser405, Ala423, and Arg440 each bind acetyl-CoA; that span reads NY.

In the N-terminal section; belongs to the N-acetylglucosamine-1-phosphate uridyltransferase family. This sequence in the C-terminal section; belongs to the transferase hexapeptide repeat family. Homotrimer. Requires Mg(2+) as cofactor.

Its subcellular location is the cytoplasm. The enzyme catalyses alpha-D-glucosamine 1-phosphate + acetyl-CoA = N-acetyl-alpha-D-glucosamine 1-phosphate + CoA + H(+). The catalysed reaction is N-acetyl-alpha-D-glucosamine 1-phosphate + UTP + H(+) = UDP-N-acetyl-alpha-D-glucosamine + diphosphate. The protein operates within nucleotide-sugar biosynthesis; UDP-N-acetyl-alpha-D-glucosamine biosynthesis; N-acetyl-alpha-D-glucosamine 1-phosphate from alpha-D-glucosamine 6-phosphate (route II): step 2/2. Its pathway is nucleotide-sugar biosynthesis; UDP-N-acetyl-alpha-D-glucosamine biosynthesis; UDP-N-acetyl-alpha-D-glucosamine from N-acetyl-alpha-D-glucosamine 1-phosphate: step 1/1. It functions in the pathway bacterial outer membrane biogenesis; LPS lipid A biosynthesis. Catalyzes the last two sequential reactions in the de novo biosynthetic pathway for UDP-N-acetylglucosamine (UDP-GlcNAc). The C-terminal domain catalyzes the transfer of acetyl group from acetyl coenzyme A to glucosamine-1-phosphate (GlcN-1-P) to produce N-acetylglucosamine-1-phosphate (GlcNAc-1-P), which is converted into UDP-GlcNAc by the transfer of uridine 5-monophosphate (from uridine 5-triphosphate), a reaction catalyzed by the N-terminal domain. This chain is Bifunctional protein GlmU, found in Citrobacter koseri (strain ATCC BAA-895 / CDC 4225-83 / SGSC4696).